Consider the following 649-residue polypeptide: 1-deoxy-D-xylulose-5-phosphate synthase (649 aa).

Residues His84 and 125–127 (GHS) contribute to the thiamine diphosphate site. Asp156 contacts Mg(2+). Thiamine diphosphate contacts are provided by residues 157–158 (GS), Asn185, Phe292, and Glu385. Asn185 contacts Mg(2+).

The protein belongs to the transketolase family. DXPS subfamily. As to quaternary structure, homodimer. The cofactor is Mg(2+). Thiamine diphosphate is required as a cofactor.

The enzyme catalyses D-glyceraldehyde 3-phosphate + pyruvate + H(+) = 1-deoxy-D-xylulose 5-phosphate + CO2. Its pathway is metabolic intermediate biosynthesis; 1-deoxy-D-xylulose 5-phosphate biosynthesis; 1-deoxy-D-xylulose 5-phosphate from D-glyceraldehyde 3-phosphate and pyruvate: step 1/1. Functionally, catalyzes the acyloin condensation reaction between C atoms 2 and 3 of pyruvate and glyceraldehyde 3-phosphate to yield 1-deoxy-D-xylulose-5-phosphate (DXP). This is 1-deoxy-D-xylulose-5-phosphate synthase from Saccharophagus degradans (strain 2-40 / ATCC 43961 / DSM 17024).